We begin with the raw amino-acid sequence, 132 residues long: Small ribosomal subunit protein uS8 (132 aa).

It belongs to the universal ribosomal protein uS8 family. In terms of assembly, part of the 30S ribosomal subunit. Contacts proteins S5 and S12.

One of the primary rRNA binding proteins, it binds directly to 16S rRNA central domain where it helps coordinate assembly of the platform of the 30S subunit. The chain is Small ribosomal subunit protein uS8 from Xanthomonas axonopodis pv. citri (strain 306).